Consider the following 71-residue polypeptide: Large ribosomal subunit protein eL38 (71 aa).

It belongs to the eukaryotic ribosomal protein eL38 family.

The chain is Large ribosomal subunit protein eL38 (RpL38) from Ixodes scapularis (Black-legged tick).